The sequence spans 555 residues: Arginine--tRNA ligase (555 aa).

A 'HIGH' region motif is present at residues 117-127 (ANPNGPLHVGH).

The protein belongs to the class-I aminoacyl-tRNA synthetase family.

The protein localises to the cytoplasm. The enzyme catalyses tRNA(Arg) + L-arginine + ATP = L-arginyl-tRNA(Arg) + AMP + diphosphate. The sequence is that of Arginine--tRNA ligase from Methanospirillum hungatei JF-1 (strain ATCC 27890 / DSM 864 / NBRC 100397 / JF-1).